Here is a 63-residue protein sequence, read N- to C-terminus: Putative flagellar calcium-binding protein (63 aa).

The span at 1–11 shows a compositional bias: polar residues; that stretch reads MGCISSKSTQT. Positions 1–23 are disordered; it reads MGCISSKSTQTGKKEGKTAAERK. Positions 12–23 are enriched in basic and acidic residues; sequence GKKEGKTAAERK. One can recognise an EF-hand domain in the interval 40–63; it reads EDKARRIELFKKFDKNNTGKLSME. Ca(2+)-binding residues include aspartate 53, asparagine 55, threonine 57, and lysine 59.

It belongs to the calflagin family.

It localises to the cell projection. Its subcellular location is the cilium. The protein localises to the flagellum. This is Putative flagellar calcium-binding protein (CABP) from Crithidia fasciculata.